The sequence spans 290 residues: Ribosomal RNA small subunit methyltransferase A (290 aa).

6 residues coordinate S-adenosyl-L-methionine: N27, L29, G54, E75, D100, and N125.

It belongs to the class I-like SAM-binding methyltransferase superfamily. rRNA adenine N(6)-methyltransferase family. RsmA subfamily.

It is found in the cytoplasm. It catalyses the reaction adenosine(1518)/adenosine(1519) in 16S rRNA + 4 S-adenosyl-L-methionine = N(6)-dimethyladenosine(1518)/N(6)-dimethyladenosine(1519) in 16S rRNA + 4 S-adenosyl-L-homocysteine + 4 H(+). Specifically dimethylates two adjacent adenosines (A1518 and A1519) in the loop of a conserved hairpin near the 3'-end of 16S rRNA in the 30S particle. May play a critical role in biogenesis of 30S subunits. The protein is Ribosomal RNA small subunit methyltransferase A of Streptococcus thermophilus (strain ATCC BAA-250 / LMG 18311).